A 360-amino-acid chain; its full sequence is A-type ATP synthase subunit C (360 aa).

Residues 1-23 (MRLLERLWGKKPSRKSDKKKKGT) are disordered. Residues 9–22 (GKKPSRKSDKKKKG) are compositionally biased toward basic residues.

It belongs to the V-ATPase V0D/AC39 subunit family. As to quaternary structure, has multiple subunits with at least A(3), B(3), C, D, E, F, H, I and proteolipid K(x).

Its subcellular location is the cell membrane. In terms of biological role, component of the A-type ATP synthase that produces ATP from ADP in the presence of a proton gradient across the membrane. The chain is A-type ATP synthase subunit C from Methanosarcina acetivorans (strain ATCC 35395 / DSM 2834 / JCM 12185 / C2A).